Reading from the N-terminus, the 205-residue chain is Holliday junction branch migration complex subunit RuvA (205 aa).

The segment at 1 to 68 (MIGYLEGTLL…QPKPVLIGFN (68 aa)) is domain I. Positions 69-146 (TEEEKDFFHL…RFADAGHSSA (78 aa)) are domain II. The flexible linker stretch occupies residues 147–151 (PDVPV). Residues 152-205 (TGSLADQTVEVLVGQLGYKPNEARLMVAGALKRNPDVSTPEALFDEIFKHGQAQ) form a domain III region.

The protein belongs to the RuvA family. In terms of assembly, homotetramer. Forms an RuvA(8)-RuvB(12)-Holliday junction (HJ) complex. HJ DNA is sandwiched between 2 RuvA tetramers; dsDNA enters through RuvA and exits via RuvB. An RuvB hexamer assembles on each DNA strand where it exits the tetramer. Each RuvB hexamer is contacted by two RuvA subunits (via domain III) on 2 adjacent RuvB subunits; this complex drives branch migration. In the full resolvosome a probable DNA-RuvA(4)-RuvB(12)-RuvC(2) complex forms which resolves the HJ.

The protein resides in the cytoplasm. Its function is as follows. The RuvA-RuvB-RuvC complex processes Holliday junction (HJ) DNA during genetic recombination and DNA repair, while the RuvA-RuvB complex plays an important role in the rescue of blocked DNA replication forks via replication fork reversal (RFR). RuvA specifically binds to HJ cruciform DNA, conferring on it an open structure. The RuvB hexamer acts as an ATP-dependent pump, pulling dsDNA into and through the RuvAB complex. HJ branch migration allows RuvC to scan DNA until it finds its consensus sequence, where it cleaves and resolves the cruciform DNA. This chain is Holliday junction branch migration complex subunit RuvA, found in Desulfosudis oleivorans (strain DSM 6200 / JCM 39069 / Hxd3) (Desulfococcus oleovorans).